The following is a 320-amino-acid chain: Beta-ketoacyl-[acyl-carrier-protein] synthase III (320 aa).

Catalysis depends on residues Cys-114 and His-247. An ACP-binding region spans residues 248–252; the sequence is QANRR. The active site involves Asn-277.

It belongs to the thiolase-like superfamily. FabH family. As to quaternary structure, homodimer.

It is found in the cytoplasm. It carries out the reaction malonyl-[ACP] + acetyl-CoA + H(+) = 3-oxobutanoyl-[ACP] + CO2 + CoA. It participates in lipid metabolism; fatty acid biosynthesis. Its function is as follows. Catalyzes the condensation reaction of fatty acid synthesis by the addition to an acyl acceptor of two carbons from malonyl-ACP. Catalyzes the first condensation reaction which initiates fatty acid synthesis and may therefore play a role in governing the total rate of fatty acid production. Possesses both acetoacetyl-ACP synthase and acetyl transacylase activities. Its substrate specificity determines the biosynthesis of branched-chain and/or straight-chain of fatty acids. The protein is Beta-ketoacyl-[acyl-carrier-protein] synthase III of Neisseria meningitidis serogroup C (strain 053442).